A 199-amino-acid polypeptide reads, in one-letter code: Cytochrome c-type cyt cy (199 aa).

Residues 7 to 27 (ITKIGVTLFAVALFYGFIYML) traverse the membrane as a helical segment. The span at 69–80 (AAETAEAAAPAE) shows a compositional bias: low complexity. The tract at residues 69-93 (AAETAEAAAPAEPAAPPPPAYVEVD) is disordered. Positions 112, 115, 116, and 148 each coordinate heme c.

In terms of processing, binds 1 heme c group covalently per subunit.

It localises to the cell membrane. Its function is as follows. Electron transfer pathways that operates during photosynthesis. In Rhodobacter capsulatus (strain ATCC BAA-309 / NBRC 16581 / SB1003), this protein is Cytochrome c-type cyt cy (cycY).